The chain runs to 326 residues: Lipoyl synthase (326 aa).

[4Fe-4S] cluster-binding residues include Cys74, Cys79, Cys85, Cys100, Cys104, Cys107, and Ser314. The 219-residue stretch at Cys85–Thr303 folds into the Radical SAM core domain.

This sequence belongs to the radical SAM superfamily. Lipoyl synthase family. It depends on [4Fe-4S] cluster as a cofactor.

The protein resides in the cytoplasm. The catalysed reaction is [[Fe-S] cluster scaffold protein carrying a second [4Fe-4S](2+) cluster] + N(6)-octanoyl-L-lysyl-[protein] + 2 oxidized [2Fe-2S]-[ferredoxin] + 2 S-adenosyl-L-methionine + 4 H(+) = [[Fe-S] cluster scaffold protein] + N(6)-[(R)-dihydrolipoyl]-L-lysyl-[protein] + 4 Fe(3+) + 2 hydrogen sulfide + 2 5'-deoxyadenosine + 2 L-methionine + 2 reduced [2Fe-2S]-[ferredoxin]. It participates in protein modification; protein lipoylation via endogenous pathway; protein N(6)-(lipoyl)lysine from octanoyl-[acyl-carrier-protein]: step 2/2. Catalyzes the radical-mediated insertion of two sulfur atoms into the C-6 and C-8 positions of the octanoyl moiety bound to the lipoyl domains of lipoate-dependent enzymes, thereby converting the octanoylated domains into lipoylated derivatives. This is Lipoyl synthase from Delftia acidovorans (strain DSM 14801 / SPH-1).